Here is a 488-residue protein sequence, read N- to C-terminus: MPGGRRGPSRQQLSRSALPSLQTLVGGTCGNGTGLRNRNGSAIGLSAPPITALITPEPVRHCHIPELPLDGGLLFEFLFFIYLLVALFIQYINIYKSVWWYPYNHPASCTSLNFHLIDYHLAAFITVMLARRLVWALISEASQVGTSSMVHYAALITARLVLLTLCGWVFCWTLVNLFRNHSVLNLLFLGYPFGVYVPLCCFHQDSRSQPLPTDCGYLVQDPLVDDGANGMATLVRPRDFLSLLRESLREQFNSTPSIPSHSCPLSPDLIRNEVECLKADFNRRIKEVLFNSLFSAYYVAFLPLCFVKSTQYYDMRWSCEHLIMVWINAFVMLSTQLLPPKYCDLLHRSASHLGKWQKLEHGSYSNAPQHIWSENTVWPQGVLVRHSRSLYKAVGPYNVAVPSEVSHARFYFLFHRPLRLLNLLLIIEGSLVLYQLYSLLRAEKWNHTLSIALILFCNYYVLFKLLRDRIVLGRAYSYPISSYGLKPH.

N-linked (GlcNAc...) asparagine glycosylation is found at N31 and N39. Helical transmembrane passes span 72-92 (GLLF…IQYI), 110-130 (TSLN…VMLA), and 155-175 (LITA…WTLV). N-linked (GlcNAc...) asparagine glycosylation is present at N180. Transmembrane regions (helical) follow at residues 182–202 (SVLN…LCCF), 287–307 (EVLF…LCFV), 319–339 (CEHL…QLLP), 420–440 (LLNL…YSLL), and 446–466 (NHTL…FKLL).

Belongs to the TMEM39 family.

The protein resides in the endoplasmic reticulum membrane. Functionally, regulates autophagy by controlling the spatial distribution and levels of the intracellular phosphatidylinositol 4-phosphate (PtdIns(4)P) pools. Modulates (PtdIns(4)P) levels by regulating the ER-to-Golgi trafficking of the phosphatidylinositide phosphatase SACM1L. This chain is Transmembrane protein 39A (tmem39a), found in Xenopus tropicalis (Western clawed frog).